The primary structure comprises 297 residues: T-cell leukemia homeobox protein 3 (297 aa).

The segment at Met-1–Tyr-68 is disordered. Positions Ala-32–Gly-52 are enriched in pro residues. A DNA-binding region (homeobox) is located at residues Arg-172–Thr-231.

As to expression, expression is restricted to neurons in the peripheral and central nervous system.

Its subcellular location is the nucleus. Its function is as follows. Seems to be involved in the development of cranial sensory innervation from peripheral ganglia. In Gallus gallus (Chicken), this protein is T-cell leukemia homeobox protein 3 (TLX3).